Consider the following 411-residue polypeptide: MIQVLLVTLCLAAFPYQGSSIILESGNVNDYEVVYPRKVTPVPRGAVQPKYEDAMQYEFKVNGEPVVLHLEKNKGLFSEDYSETHYSPDGREITTYPLVEDHCYYHGRIENDADSTASISACNGLKGHFKLQGEMYLIEPLELSDSEAHAVYKYENVEKEDEAPKMCGVTQNWESYEPIKKAFQLNLTPEQQGFPQRYVELVIVADHRMNTKYNGDSDKIRQWVHQIVNTINEIYRPLNIRFALVGLEIWSNQDLITVTSVSHDTLASFGNWRETDLLRRQRHDNAQLLTAIDFDGDTVGLAYVGGMCQLKHSTGVIQDHSAINLLVALTMAHELGHNLGMNHDGNQCHCGANSCVMPSVLSDQPSKLFSDCSKKDYQTFLPVNNPQCILNKPLRTDTASTPVSGNELLEA.

Residues 1–20 (MIQVLLVTLCLAAFPYQGSS) form the signal peptide. The propeptide occupies 21–189 (IILESGNVND…KKAFQLNLTP (169 aa)). The 197-residue stretch at 197 to 393 (RYVELVIVAD…NNPQCILNKP (197 aa)) folds into the Peptidase M12B domain. Ca(2+)-binding residues include glutamate 200 and aspartate 284. Intrachain disulfides connect cysteine 308–cysteine 388, cysteine 348–cysteine 372, and cysteine 350–cysteine 355. Histidine 333 contacts Zn(2+). The active site involves glutamate 334. Zn(2+) is bound by residues histidine 337 and histidine 343. Ca(2+)-binding residues include cysteine 388, asparagine 391, valine 403, asparagine 406, leucine 408, and glutamate 410.

Belongs to the venom metalloproteinase (M12B) family. P-I subfamily. As to quaternary structure, monomer. Zn(2+) is required as a cofactor. As to expression, expressed by the venom gland.

Its subcellular location is the secreted. Its activity is regulated as follows. Inhibited by EDTA and 1,10-phenanthroline, but not by PMSF. Its function is as follows. Snake venom zinc metalloprotease that has fibrinolytic activity. The recombinant enzyme cleaves both alpha- and beta-chains of fibrinogen, but not the gamma-chain. The recombinant protein does not produce hemorrhage in mice. Cleaves the peptide substrate Abz-LVEALYQ-EDDnp at the Ala-Leu bond in vitro. The protein is Snake venom metalloproteinase ACLF (ACLPREF) of Agkistrodon contortrix laticinctus (Broad-banded copperhead).